The chain runs to 293 residues: ATP synthase gamma chain (293 aa).

It belongs to the ATPase gamma chain family. As to quaternary structure, F-type ATPases have 2 components, CF(1) - the catalytic core - and CF(0) - the membrane proton channel. CF(1) has five subunits: alpha(3), beta(3), gamma(1), delta(1), epsilon(1). CF(0) has three main subunits: a, b and c.

The protein localises to the cell membrane. Produces ATP from ADP in the presence of a proton gradient across the membrane. The gamma chain is believed to be important in regulating ATPase activity and the flow of protons through the CF(0) complex. In Streptococcus sanguinis, this protein is ATP synthase gamma chain.